Consider the following 258-residue polypeptide: Shikimate dehydrogenase (NADP(+)) (258 aa).

Residues 14 to 16 (SES) and T61 each bind shikimate. Catalysis depends on K65, which acts as the Proton acceptor. Residues N86 and D101 each coordinate shikimate. NADP(+) is bound by residues 125-129 (GSGGS) and L211. Shikimate is bound at residue Y213. G234 lines the NADP(+) pocket.

Belongs to the shikimate dehydrogenase family. In terms of assembly, homodimer.

The catalysed reaction is shikimate + NADP(+) = 3-dehydroshikimate + NADPH + H(+). The protein operates within metabolic intermediate biosynthesis; chorismate biosynthesis; chorismate from D-erythrose 4-phosphate and phosphoenolpyruvate: step 4/7. Involved in the biosynthesis of the chorismate, which leads to the biosynthesis of aromatic amino acids. Catalyzes the reversible NADPH linked reduction of 3-dehydroshikimate (DHSA) to yield shikimate (SA). The protein is Shikimate dehydrogenase (NADP(+)) of Clostridium botulinum (strain 657 / Type Ba4).